Here is a 540-residue protein sequence, read N- to C-terminus: Glucose-6-phosphate isomerase (540 aa).

Glu350 serves as the catalytic Proton donor. Residues His381 and Lys503 contribute to the active site.

This sequence belongs to the GPI family.

Its subcellular location is the cytoplasm. The catalysed reaction is alpha-D-glucose 6-phosphate = beta-D-fructose 6-phosphate. It participates in carbohydrate biosynthesis; gluconeogenesis. Its pathway is carbohydrate degradation; glycolysis; D-glyceraldehyde 3-phosphate and glycerone phosphate from D-glucose: step 2/4. In terms of biological role, catalyzes the reversible isomerization of glucose-6-phosphate to fructose-6-phosphate. The chain is Glucose-6-phosphate isomerase from Burkholderia lata (strain ATCC 17760 / DSM 23089 / LMG 22485 / NCIMB 9086 / R18194 / 383).